Here is a 283-residue protein sequence, read N- to C-terminus: Thymidylate synthase (283 aa).

Arg22 serves as a coordination point for dUMP. Cys160 (nucleophile) is an active-site residue. DUMP contacts are provided by residues 180-183, Asn191, and 221-223; these read RSCD and HIY. Residue Asp183 coordinates (6R)-5,10-methylene-5,6,7,8-tetrahydrofolate. Residue Ser282 coordinates (6R)-5,10-methylene-5,6,7,8-tetrahydrofolate.

The protein belongs to the thymidylate synthase family. Bacterial-type ThyA subfamily. Homodimer.

It localises to the cytoplasm. It carries out the reaction dUMP + (6R)-5,10-methylene-5,6,7,8-tetrahydrofolate = 7,8-dihydrofolate + dTMP. Its pathway is pyrimidine metabolism; dTTP biosynthesis. Catalyzes the reductive methylation of 2'-deoxyuridine-5'-monophosphate (dUMP) to 2'-deoxythymidine-5'-monophosphate (dTMP) while utilizing 5,10-methylenetetrahydrofolate (mTHF) as the methyl donor and reductant in the reaction, yielding dihydrofolate (DHF) as a by-product. This enzymatic reaction provides an intracellular de novo source of dTMP, an essential precursor for DNA biosynthesis. The chain is Thymidylate synthase from Haemophilus influenzae (strain 86-028NP).